We begin with the raw amino-acid sequence, 545 residues long: Glucose-6-phosphate isomerase (545 aa).

Glu351 serves as the catalytic Proton donor. Residues His382 and Lys510 contribute to the active site.

The protein belongs to the GPI family.

It localises to the cytoplasm. The catalysed reaction is alpha-D-glucose 6-phosphate = beta-D-fructose 6-phosphate. The protein operates within carbohydrate biosynthesis; gluconeogenesis. Its pathway is carbohydrate degradation; glycolysis; D-glyceraldehyde 3-phosphate and glycerone phosphate from D-glucose: step 2/4. Its function is as follows. Catalyzes the reversible isomerization of glucose-6-phosphate to fructose-6-phosphate. In Helicobacter pylori (strain P12), this protein is Glucose-6-phosphate isomerase.